Here is a 177-residue protein sequence, read N- to C-terminus: MVRAWYMDDSDADQRAPHMTDPPQPVELDQLKNIGVLYWQLSGNEDDETLAGIRKDRGYSYNDLIEITPEKLPNYEQKIKTFFEEHLHLDEEIRYCVGGSGYFDVRDKGDKWIRIEMEKGDLIVLPAGIYHRFTLDEKNYIKAMRLFVGEPVWTPYNRPADDKDARKEYLKTMGLAA.

A disordered region spans residues 1–23; the sequence is MVRAWYMDDSDADQRAPHMTDPP. 4 residues coordinate Fe(2+): His-86, His-88, Glu-92, and His-131. Ni(2+) contacts are provided by His-86, His-88, Glu-92, and His-131.

It belongs to the acireductone dioxygenase (ARD) family. It depends on Fe(2+) as a cofactor. The cofactor is Ni(2+).

It is found in the cytoplasm. Its subcellular location is the nucleus. The enzyme catalyses 1,2-dihydroxy-5-(methylsulfanyl)pent-1-en-3-one + O2 = 4-methylsulfanyl-2-oxobutanoate + formate + 2 H(+). The catalysed reaction is 1,2-dihydroxy-5-(methylsulfanyl)pent-1-en-3-one + O2 = 3-(methylsulfanyl)propanoate + CO + formate + 2 H(+). It participates in amino-acid biosynthesis; L-methionine biosynthesis via salvage pathway; L-methionine from S-methyl-5-thio-alpha-D-ribose 1-phosphate: step 5/6. Catalyzes 2 different reactions between oxygen and the acireductone 1,2-dihydroxy-3-keto-5-methylthiopentene (DHK-MTPene) depending upon the metal bound in the active site. Fe-containing acireductone dioxygenase (Fe-ARD) produces formate and 2-keto-4-methylthiobutyrate (KMTB), the alpha-ketoacid precursor of methionine in the methionine recycle pathway. Ni-containing acireductone dioxygenase (Ni-ARD) produces methylthiopropionate, carbon monoxide and formate, and does not lie on the methionine recycle pathway. This is Acireductone dioxygenase from Branchiostoma floridae (Florida lancelet).